Consider the following 207-residue polypeptide: Dephospho-CoA kinase (207 aa).

The DPCK domain maps to 4 to 203 (VIGLTGGIAS…EEGYIEKPNY (200 aa)). 12–17 (ASGKST) is a binding site for ATP.

Belongs to the CoaE family.

It localises to the cytoplasm. The enzyme catalyses 3'-dephospho-CoA + ATP = ADP + CoA + H(+). It functions in the pathway cofactor biosynthesis; coenzyme A biosynthesis; CoA from (R)-pantothenate: step 5/5. Catalyzes the phosphorylation of the 3'-hydroxyl group of dephosphocoenzyme A to form coenzyme A. The sequence is that of Dephospho-CoA kinase from Staphylococcus aureus (strain MRSA252).